The primary structure comprises 313 residues: Olfactory receptor 1J1 (313 aa).

Topologically, residues 1 to 25 are extracellular; it reads MRLKNHSSVSEFLLLGFPIRPEQGG. An N-linked (GlcNAc...) asparagine glycan is attached at N5. The chain crosses the membrane as a helical span at residues 26–46; the sequence is IFFSLFLAMYLITVLGNLLII. The Cytoplasmic portion of the chain corresponds to 47–57; the sequence is LLIRLDSHLHT. A helical transmembrane segment spans residues 58–78; it reads PMYFFLSHLAFTDISFSSVTV. Topologically, residues 79 to 97 are extracellular; sequence PKMLTKVQNQPIPITYEEC. C97 and C189 are oxidised to a cystine. Residues 98–118 traverse the membrane as a helical segment; it reads VSQTYFFIFFADLDSFLITSM. Residues 119-142 lie on the Cytoplasmic side of the membrane; sequence AYDRYMAICHPLHYITIMSQSRCA. Residues 143-163 traverse the membrane as a helical segment; it reads MLVAVSWVIASACALLHSLLL. Residues 164–196 are Extracellular-facing; sequence DQLSFCADHTVPHFFCDLGALLKLSCSDTSLNQ. A helical membrane pass occupies residues 197–217; it reads LVIFTAGLAAIMLPFLCILIS. The Cytoplasmic portion of the chain corresponds to 218–240; the sequence is YGRIGFTILQVPTTKGICKALST. A helical membrane pass occupies residues 241 to 261; that stretch reads CGSHLSVVALYYGSIIGLYFL. At 262–271 the chain is on the extracellular side; the sequence is PPSNSKINNN. A helical transmembrane segment spans residues 272-292; it reads IVASVMYTVVTPMLNPFIYSL. At 293–313 the chain is on the cytoplasmic side; the sequence is RNKDMKGALKKLLSKKTEFSK.

Belongs to the G-protein coupled receptor 1 family.

The protein localises to the cell membrane. In terms of biological role, odorant receptor. This Mus musculus (Mouse) protein is Olfactory receptor 1J1.